Here is an 816-residue protein sequence, read N- to C-terminus: Molybdenum cofactor sulfurase (816 aa).

Lys-273 is modified (N6-(pyridoxal phosphate)lysine). Residue Cys-427 is part of the active site. Positions 647–812 (NSDSQSHSCI…IRVGEEIIPN (166 aa)) constitute an MOSC domain.

This sequence belongs to the class-V pyridoxal-phosphate-dependent aminotransferase family. MOCOS subfamily. It depends on pyridoxal 5'-phosphate as a cofactor. Ubiquitously expressed.

The catalysed reaction is Mo-molybdopterin + L-cysteine + AH2 = thio-Mo-molybdopterin + L-alanine + A + H2O. It functions in the pathway cofactor biosynthesis; molybdopterin biosynthesis. Sulfurates the molybdenum cofactor. Sulfation of molybdenum is essential for xanthine dehydrogenase (XDH) and aldehyde oxidase (ADO) enzymes in which molybdenum cofactor is liganded by 1 oxygen and 1 sulfur atom in active form. In Solanum lycopersicum (Tomato), this protein is Molybdenum cofactor sulfurase (FLACCA).